The primary structure comprises 201 residues: UPF0301 protein Atu0781 (201 aa).

Belongs to the UPF0301 (AlgH) family.

In Agrobacterium fabrum (strain C58 / ATCC 33970) (Agrobacterium tumefaciens (strain C58)), this protein is UPF0301 protein Atu0781.